The primary structure comprises 386 residues: Succinate--CoA ligase [ADP-forming] subunit beta (386 aa).

The region spanning Lys9–Glu244 is the ATP-grasp domain. ATP contacts are provided by residues Lys46, Gly53 to Gly55, Glu99, Cys102, and Glu107. Residues Asn199 and Asp213 each contribute to the Mg(2+) site. Substrate contacts are provided by residues Asn264 and Gly321–Met323.

It belongs to the succinate/malate CoA ligase beta subunit family. Heterotetramer of two alpha and two beta subunits. It depends on Mg(2+) as a cofactor.

The enzyme catalyses succinate + ATP + CoA = succinyl-CoA + ADP + phosphate. It catalyses the reaction GTP + succinate + CoA = succinyl-CoA + GDP + phosphate. It participates in carbohydrate metabolism; tricarboxylic acid cycle; succinate from succinyl-CoA (ligase route): step 1/1. Functionally, succinyl-CoA synthetase functions in the citric acid cycle (TCA), coupling the hydrolysis of succinyl-CoA to the synthesis of either ATP or GTP and thus represents the only step of substrate-level phosphorylation in the TCA. The beta subunit provides nucleotide specificity of the enzyme and binds the substrate succinate, while the binding sites for coenzyme A and phosphate are found in the alpha subunit. This chain is Succinate--CoA ligase [ADP-forming] subunit beta, found in Bacillus pumilus (strain SAFR-032).